Here is a 373-residue protein sequence, read N- to C-terminus: Stationary phase protein 5 (373 aa).

Its function is as follows. Required for survival at high temperature during stationary phase. This chain is Stationary phase protein 5 (SPG5), found in Saccharomyces cerevisiae (strain ATCC 204508 / S288c) (Baker's yeast).